Reading from the N-terminus, the 254-residue chain is CRISPR-associated endoribonuclease Cas6 1 (254 aa).

Catalysis depends on Tyr-32, which acts as the Proton acceptor. The active-site Proton donor is the His-47.

The protein belongs to the CRISPR-associated protein Cas6/Cse3/CasE family.

In terms of biological role, CRISPR (clustered regularly interspaced short palindromic repeat) is an adaptive immune system that provides protection against mobile genetic elements (viruses, transposable elements and conjugative plasmids). CRISPR clusters contain sequences complementary to antecedent mobile elements and target invading nucleic acids. CRISPR clusters are transcribed and processed into CRISPR RNA (crRNA). This protein processes pre-crRNA into individual crRNA units. This Methanocaldococcus jannaschii (strain ATCC 43067 / DSM 2661 / JAL-1 / JCM 10045 / NBRC 100440) (Methanococcus jannaschii) protein is CRISPR-associated endoribonuclease Cas6 1 (cas6a).